Reading from the N-terminus, the 1122-residue chain is Cytosolic carboxypeptidase 4 (1122 aa).

The segment at 287–338 (PGSTSSELPLNLTEEDFDDDGDEEMDKDSDVEAVKEDDDLETDLSKLSSKPG) is disordered. A compositionally biased stretch (acidic residues) spans 299 to 313 (TEEDFDDDGDEEMDK). One can recognise a Peptidase M14 domain in the interval 731–1021 (YPYTYSTLMT…MYCLGLLILE (291 aa)). Residues His-803, Glu-806, and His-900 each contribute to the Zn(2+) site. The active-site Proton donor/acceptor is Glu-985. The tract at residues 1099-1122 (CALNKDEEEEEKEEGTGWRRRSVT) is disordered.

It belongs to the peptidase M14 family. As to quaternary structure, interacts with MYLK. Interacts with TCF4. Requires Zn(2+) as cofactor. In terms of tissue distribution, widely expressed at low level. Expressed in eye, muscle, pituitary, testis and to a lower extent in brain.

Its subcellular location is the cytoplasm. The protein localises to the cytosol. It carries out the reaction (L-glutamyl)(n+1)-gamma-L-glutamyl-L-glutamyl-[protein] + H2O = (L-glutamyl)(n)-gamma-L-glutamyl-L-glutamyl-[protein] + L-glutamate. The catalysed reaction is C-terminal L-alpha-aminoacyl-L-glutamyl-L-glutamyl-[tubulin] + H2O = C-terminal L-alpha-aminoacyl-L-glutamyl-[tubulin] + L-glutamate. Metallocarboxypeptidase that mediates deglutamylation of tubulin and non-tubulin target proteins. Catalyzes the removal of polyglutamate side chains present on the gamma-carboxyl group of glutamate residues within the C-terminal tail of tubulin protein. Specifically cleaves tubulin long-side-chains, while it is not able to remove the branching point glutamate. Also catalyzes the removal of polyglutamate residues from the carboxy-terminus of non-tubulin proteins such as MYLK. The polypeptide is Cytosolic carboxypeptidase 4 (Mus musculus (Mouse)).